Consider the following 277-residue polypeptide: ATP synthase subunit a (277 aa).

The next 5 membrane-spanning stretches (helical) occupy residues 40–60 (AWHVDTLAWSIGLGLLFLIIF), 98–118 (SALIAPLALTIFVWVLLMNLM), 154–174 (DLNLTFALASGVFILILFYSI), 219–239 (LFGNLYASELIFILIATIGYF), and 245–265 (FMWAVFHILVLPLQAFIFMML).

This sequence belongs to the ATPase A chain family. In terms of assembly, F-type ATPases have 2 components, CF(1) - the catalytic core - and CF(0) - the membrane proton channel. CF(1) has five subunits: alpha(3), beta(3), gamma(1), delta(1), epsilon(1). CF(0) has three main subunits: a(1), b(2) and c(9-12). The alpha and beta chains form an alternating ring which encloses part of the gamma chain. CF(1) is attached to CF(0) by a central stalk formed by the gamma and epsilon chains, while a peripheral stalk is formed by the delta and b chains.

It localises to the cell inner membrane. Its function is as follows. Key component of the proton channel; it plays a direct role in the translocation of protons across the membrane. The sequence is that of ATP synthase subunit a from Alteromonas mediterranea (strain DSM 17117 / CIP 110805 / LMG 28347 / Deep ecotype).